A 285-amino-acid polypeptide reads, in one-letter code: Neuralized-like protein 2 (285 aa).

Residues 1–20 (MAAASEPVDSGALWGLERPE) are disordered. The 222-residue stretch at 23 to 244 (PTRFHRVHGA…STKSVRLVQL (222 aa)) folds into the NHR domain. Residues 250-285 (SLQTLCRLVIQRSMVHRLAIDGLHLPKELKDFCKYE) form the SOCS box domain.

As to quaternary structure, probable component the ECS(NEURL2) E3 ubiquitin-protein ligase complex consisting of ELOB/Elongin B, ELOC/Elongin C, CUL5, RBX1 and NEURL2. Interacts with CTNNB1. Expressed specifically in skeletal and cardiac muscles.

The protein localises to the cytoplasm. The protein operates within protein modification; protein ubiquitination. Functionally, plays an important role in the process of myofiber differentiation and maturation. Probable substrate-recognition component of a SCF-like ECS (Elongin BC-CUL2/5-SOCS-box protein) E3 ubiquitin-protein ligase complex, which mediates the ubiquitination of proteins. Probably contributes to catalysis through recognition and positioning of the substrate and the ubiquitin-conjugating enzyme. During myogenesis, controls the ubiquitination and degradation of the specific pool of CTNNB1/beta-catenin located at the sarcolemma. The protein is Neuralized-like protein 2 (NEURL2) of Homo sapiens (Human).